Consider the following 318-residue polypeptide: Na(+)-translocating NADH-quinone reductase subunit C (318 aa).

Residues 13–33 (WYIILFIFVLSLVAGTLLSSV) traverse the membrane as a helical segment. Threonine 281 is modified (FMN phosphoryl threonine).

The protein belongs to the NqrC family. As to quaternary structure, composed of six subunits; NqrA, NqrB, NqrC, NqrD, NqrE and NqrF. Requires FMN as cofactor.

The protein localises to the cell inner membrane. The catalysed reaction is a ubiquinone + n Na(+)(in) + NADH + H(+) = a ubiquinol + n Na(+)(out) + NAD(+). Its function is as follows. NQR complex catalyzes the reduction of ubiquinone-1 to ubiquinol by two successive reactions, coupled with the transport of Na(+) ions from the cytoplasm to the periplasm. NqrA to NqrE are probably involved in the second step, the conversion of ubisemiquinone to ubiquinol. The polypeptide is Na(+)-translocating NADH-quinone reductase subunit C (Chlamydia muridarum (strain MoPn / Nigg)).